Here is a 715-residue protein sequence, read N- to C-terminus: Fatty acid oxidation complex subunit alpha (715 aa).

Residues 1–190 (MDMTSAFTLN…RVGLVDEVVP (190 aa)) form an enoyl-CoA hydratase region. The 3-hydroxyacyl-CoA dehydrogenase stretch occupies residues 306–715 (GPLASVGVLG…WNSGETDLKE (410 aa)).

It in the N-terminal section; belongs to the enoyl-CoA hydratase/isomerase family. This sequence in the central section; belongs to the 3-hydroxyacyl-CoA dehydrogenase family. Heterotetramer of two alpha chains (FadJ) and two beta chains (FadI).

It is found in the cytoplasm. The catalysed reaction is a (3S)-3-hydroxyacyl-CoA = a (2E)-enoyl-CoA + H2O. It catalyses the reaction a 4-saturated-(3S)-3-hydroxyacyl-CoA = a (3E)-enoyl-CoA + H2O. It carries out the reaction a (3S)-3-hydroxyacyl-CoA + NAD(+) = a 3-oxoacyl-CoA + NADH + H(+). The enzyme catalyses (3S)-3-hydroxybutanoyl-CoA = (3R)-3-hydroxybutanoyl-CoA. The protein operates within lipid metabolism; fatty acid beta-oxidation. In terms of biological role, catalyzes the formation of a hydroxyacyl-CoA by addition of water on enoyl-CoA. Also exhibits 3-hydroxyacyl-CoA epimerase and 3-hydroxyacyl-CoA dehydrogenase activities. The protein is Fatty acid oxidation complex subunit alpha of Citrobacter koseri (strain ATCC BAA-895 / CDC 4225-83 / SGSC4696).